A 538-amino-acid chain; its full sequence is Nucleolar protein 12 (538 aa).

Disordered stretches follow at residues 1–25 (MGKK…LPFL), 41–203 (KSAG…KSNR), 336–378 (ETDP…ASTR), 433–455 (AKKL…LGEG), and 476–538 (KAEG…KMAK). The span at 63-92 (PEDDVEKEEDDEEISELEEDLQSEDEDMQD) shows a compositional bias: acidic residues. Residues 64–156 (EDDVEKEEDD…KAKRQKVEEG (93 aa)) are a coiled coil. Basic and acidic residues-rich tracts occupy residues 127 to 144 (TYMR…EKRR), 151 to 173 (QKVE…GRDE), and 182 to 202 (TVPR…EKSN). RRM domains follow at residues 203–315 (RTVF…SVAH) and 323–435 (RCVF…RAKK). Over residues 502–521 (IKIKTKSRGSKGKPKNRSAK) the composition is skewed to basic residues.

This sequence belongs to the RRM RBM34 family.

The protein localises to the nucleus. It is found in the nucleolus. Involved in pre-25S rRNA processing. This is Nucleolar protein 12 (nop12) from Aspergillus fumigatus (strain ATCC MYA-4609 / CBS 101355 / FGSC A1100 / Af293) (Neosartorya fumigata).